A 492-amino-acid chain; its full sequence is Chitooligosaccharide oxidase (492 aa).

A signal peptide spans Met1–Ala19. Positions Leu57–Ala229 constitute an FAD-binding PCMH-type domain. Residues His94 to Cys154 constitute a cross-link (6-(S-cysteinyl)-8alpha-(pros-histidyl)-FAD (His-Cys)).

This sequence belongs to the oxygen-dependent FAD-linked oxidoreductase family. FAD is required as a cofactor. The FAD cofactor is bound via a bicovalent 6-S-cysteinyl, 8alpha-N1-histidyl FAD linkage.

The protein localises to the secreted. It carries out the reaction N,N'-diacetylchitobiose + O2 = N,N'-diacetylchitobiono-1,5-lactone + H2O2. The enzyme catalyses N,N',N''-triacetylchitotriose + O2 = N,N',N''-triacetylchitotriono-1,5-lactone + H2O2. The catalysed reaction is N,N',N'',N'''-tetraacetylchitotetraose + O2 = N,N',N'',N'''-tetraacetylchitotetraono-1,5-lactone + H2O2. Catalyzes the selective oxidation of C1 hydroxyl moieties on chitooligosaccharides with concomitant reduction of molecular oxygen to hydrogen peroxide. This results in the formation of the corresponding lactones, which typically undergo spontaneous hydrolysis. Chitooligosaccharides are homo- or heterooligomers of N-acetylglucosamine (GlcNAc) and D-glucosamine which are linked through beta-1,4-glycosidic bonds. For optimal substrate binding at least 2 GlcNAc units are needed, and chitooligosaccharide oxidase is most efficient on chitobiose, chitotriose and chitotetraose. This is Chitooligosaccharide oxidase from Gibberella zeae (strain ATCC MYA-4620 / CBS 123657 / FGSC 9075 / NRRL 31084 / PH-1) (Wheat head blight fungus).